The sequence spans 1243 residues: Plasma membrane calcium-transporting ATPase 2 (1243 aa).

A compositionally biased stretch (polar residues) spans 1 to 13; sequence MGDMTNSDFYSKN. Positions 1-24 are disordered; the sequence is MGDMTNSDFYSKNQRNESSHGGEF. At 1 to 94 the chain is on the cytoplasmic side; the sequence is MGDMTNSDFY…NFIPPKKPKT (94 aa). Serine 18 is subject to Phosphoserine. A helical transmembrane segment spans residues 95–115; that stretch reads FLQLVWEALQDVTLIILEIAA. At 116 to 152 the chain is on the extracellular side; it reads IISLGLSFYHPPGEGNEGCATAQGGAEDEGEAEAGWI. A helical transmembrane segment spans residues 153–173; that stretch reads EGAAILLSVICVVLVTAFNDW. At 174–390 the chain is on the cytoplasmic side; it reads SKEKQFRGLQ…KEKSVLQGKL (217 aa). The tract at residues 334–381 is disordered; sequence GKMQDGNVDASQSKAKQQDGAAAMEMQPLKSAEGGDADDRKKASMHKK. The helical transmembrane segment at 391–410 threads the bilayer; that stretch reads TKLAVQIGKAGLVMSAITVI. The Extracellular portion of the chain corresponds to 411-443; it reads ILVLYFTVDTFVVNKKPWLPECTPVYVQYFVKF. Residues 444-461 traverse the membrane as a helical segment; sequence FIIGVTVLVVAVPEGLPL. Over 462 to 875 the chain is Cytoplasmic; sequence AVTISLAYSV…MWGRNVYDSI (414 aa). Aspartate 499 serves as the catalytic 4-aspartylphosphate intermediate. Aspartate 820 and aspartate 824 together coordinate Mg(2+). A helical transmembrane segment spans residues 876–895; that stretch reads SKFLQFQLTVNVVAVIVAFT. The Extracellular segment spans residues 896–905; the sequence is GACITQDSPL. A helical membrane pass occupies residues 906 to 926; the sequence is KAVQMLWVNLIMDTFASLALA. At 927–946 the chain is on the cytoplasmic side; it reads TEPPTETLLLRKPYGRNKPL. The chain crosses the membrane as a helical span at residues 947–969; it reads ISRTMMKNILGHAVYQLALIFTL. The Extracellular segment spans residues 970–987; that stretch reads LFVGEKMFQIDSGRNAPL. Residues 988 to 1009 form a helical membrane-spanning segment; the sequence is HSPPSEHYTIIFNTFVMMQLFN. The Cytoplasmic portion of the chain corresponds to 1010 to 1028; the sequence is EINARKIHGERNVFDGIFR. Residues 1029–1050 traverse the membrane as a helical segment; that stretch reads NPIFCTIVLGTFAIQIVIVQFG. The Extracellular portion of the chain corresponds to 1051–1060; it reads GKPFSCSPLQ. Residues 1061–1082 form a helical membrane-spanning segment; the sequence is LDQWMWCIFIGLGELVWGQVIA. The Cytoplasmic portion of the chain corresponds to 1083 to 1243; sequence TIPTSRLKFL…SPIHSLETSL (161 aa). Phosphoserine is present on residues glutamate 1120, arginine 1132, and leucine 1134. The tract at residues 1123-1140 is calmodulin-binding subdomain A; that stretch reads LRRGQILWFRGLNRIQTQ. Position 1139 is a phosphothreonine; by PKC (threonine 1139). Positions 1141–1150 are calmodulin-binding subdomain B; sequence IRVVKAFRSS. Phosphoserine occurs at positions 1146, 1151, 1163, 1165, 1177, and 1178. At threonine 1188 the chain carries Phosphothreonine. The disordered stretch occupies residues 1194–1243; the sequence is AALKQNSSPPSSLNKNNSAIDSGINLTTDTSKSATSSSPGSPIHSLETSL. Low complexity-rich tracts occupy residues 1196–1211 and 1220–1234; these read LKQN…KNNS and TTDT…SPGS. Position 1201 is a phosphoserine; by PKA (serine 1201). A Phosphoserine modification is found at serine 1211.

It belongs to the cation transport ATPase (P-type) (TC 3.A.3) family. Type IIB subfamily. In terms of assembly, interacts with PDZD11. Mainly expressed in brain cortex. Found in low levels in skeletal muscle, heart muscle, stomach, liver, kidney and lung. Isoforms containing segment B are found in brain cortex and at low levels in other tissues. Isoforms containing segments X and W are found at low levels in all tissues. Isoforms containing segment A and segment Z are found at low levels in skeletal muscle and heart muscle.

It is found in the cell membrane. Its subcellular location is the synapse. The protein resides in the apical cell membrane. The protein localises to the basolateral cell membrane. The enzyme catalyses Ca(2+)(in) + ATP + H2O = Ca(2+)(out) + ADP + phosphate + H(+). Its activity is regulated as follows. Up-regulated by calmodulin which increases the affinity of the pump for Ca(2+) ions. Functionally, ATP-driven Ca(2+) ion pump involved in the maintenance of basal intracellular Ca(2+) levels in specialized cells of cerebellar circuit and vestibular and cochlear systems. Uses ATP as an energy source to transport cytosolic Ca(2+) ions across the plasma membrane to the extracellular compartment. Has fast activation and Ca(2+) clearance rate suited to control fast neuronal Ca(2+) dynamics. At parallel fiber to Purkinje neuron synapse, mediates presynaptic Ca(2+) efflux in response to climbing fiber-induced Ca(2+) rise. Provides for fast return of Ca(2+) concentrations back to their resting levels, ultimately contributing to long-term depression induction and motor learning. Plays an essential role in hearing and balance. In cochlear hair cells, shuttles Ca(2+) ions from stereocilia to the endolymph and dissipates Ca(2+) transients generated by the opening of the mechanoelectrical transduction channels. Regulates Ca(2+) levels in the vestibular system, where it contributes to the formation of otoconia. In non-excitable cells, regulates Ca(2+) signaling through spatial control of Ca(2+) ions extrusion and dissipation of Ca(2+) transients generated by store-operated channels. In lactating mammary gland, allows for the high content of Ca(2+) ions in the milk. The protein is Plasma membrane calcium-transporting ATPase 2 of Homo sapiens (Human).